A 101-amino-acid polypeptide reads, in one-letter code: Small ribosomal subunit protein uS14 (101 aa).

It belongs to the universal ribosomal protein uS14 family. Part of the 30S ribosomal subunit. Contacts proteins S3 and S10.

In terms of biological role, binds 16S rRNA, required for the assembly of 30S particles and may also be responsible for determining the conformation of the 16S rRNA at the A site. The protein is Small ribosomal subunit protein uS14 of Paenarthrobacter aurescens (strain TC1).